The sequence spans 484 residues: Secreted RxLR effector protein 104 (484 aa).

A signal peptide spans 1-24; that stretch reads MRSAYPVLTALLVVASSQIAAGSG. The RxLR-dEER signature appears at 48–65; it reads RFLRGSRDVHNNVANEER. Asparagine 175 carries N-linked (GlcNAc...) asparagine glycosylation. The interval 324 to 463 is disordered; sequence ENPKGQSPYP…SSSVLTPEDV (140 aa). Over residues 327 to 346 the composition is skewed to polar residues; sequence KGQSPYPSTPLTAASTSKGG. Over residues 402–413 the composition is skewed to low complexity; that stretch reads SSSSGPSRAFAP. The span at 418–428 shows a compositional bias: polar residues; it reads DQTFITENSRL.

It belongs to the RxLR effector family.

It localises to the secreted. The protein resides in the host nucleus. Functionally, secreted effector that completely suppresses the host cell death induced by cell death-inducing proteins. The polypeptide is Secreted RxLR effector protein 104 (Plasmopara viticola (Downy mildew of grapevine)).